We begin with the raw amino-acid sequence, 70 residues long: Large ribosomal subunit protein bL31 (70 aa).

At Lys8 the chain carries N6-acetyllysine. Zn(2+) is bound by residues Cys16, Cys18, Cys37, and Cys40.

This sequence belongs to the bacterial ribosomal protein bL31 family. Type A subfamily. In terms of assembly, part of the 50S ribosomal subunit. Requires Zn(2+) as cofactor.

In terms of biological role, binds the 23S rRNA. This Escherichia coli O6:K15:H31 (strain 536 / UPEC) protein is Large ribosomal subunit protein bL31.